Here is a 397-residue protein sequence, read N- to C-terminus: MAKEKFERTKPHVNIGTIGHIDHGKTTLTAAITKHAALRGFGKFVAFDEIDKAPEERERGITISTAHVEYETAKRHYAHVDCPGHADYIKNMITGAAQMDGAILVVSADDGPMPQTREHILLARQVGVPSIVVFLNKCDMVDDEELIELVEMELQELLTKYEFPGDDTPIVRGSALKALEADTSDDPAAEPILKLLDVLDEYVKEPVRDTDKDFLMPIEDVFSISGRGTVVTGRIDRGIIKTGEEVELVGIRDTTKTICTGVEMFRKLLDEGRAGDNVGLLLRGTKRDAVERGQVVAKPGTITPHTKFKAEIYCLSKEEGGRHTPFFSGYRPQFFFRTTDVTGVLSLPEGVEMIMPGDNAAITAELIAPIAMEKELRFAIREGGRTVGAGVIGEIIE.

One can recognise a tr-type G domain in the interval 10–207; it reads KPHVNIGTIG…VLDEYVKEPV (198 aa). The G1 stretch occupies residues 19–26; that stretch reads GHIDHGKT. 19 to 26 contributes to the GTP binding site; the sequence is GHIDHGKT. T26 contributes to the Mg(2+) binding site. The segment at 60–64 is G2; it reads GITIS. The G3 stretch occupies residues 81 to 84; sequence DCPG. GTP contacts are provided by residues 81-85 and 136-139; these read DCPGH and NKCD. The G4 stretch occupies residues 136-139; that stretch reads NKCD. The G5 stretch occupies residues 174 to 176; the sequence is SAL.

This sequence belongs to the TRAFAC class translation factor GTPase superfamily. Classic translation factor GTPase family. EF-Tu/EF-1A subfamily. As to quaternary structure, monomer.

It localises to the cytoplasm. It catalyses the reaction GTP + H2O = GDP + phosphate + H(+). Functionally, GTP hydrolase that promotes the GTP-dependent binding of aminoacyl-tRNA to the A-site of ribosomes during protein biosynthesis. The polypeptide is Elongation factor Tu (Desulforapulum autotrophicum (strain ATCC 43914 / DSM 3382 / VKM B-1955 / HRM2) (Desulfobacterium autotrophicum)).